A 253-amino-acid polypeptide reads, in one-letter code: Testis-expressed protein 47 (253 aa).

The chain is Testis-expressed protein 47 from Rattus norvegicus (Rat).